A 1744-amino-acid chain; its full sequence is MVDGKEVYISFNRWEDTIRHSFVSHLSAEFQRKGVSVFASEDSASDDRFAEESDAAIAKARVSVVIFSENFASSKGCLNEFLKVSKCRRSKGLVVVPVFYGLTNSIVKKHCLELKKMYPDDKVDEWRNALWDIADLRGGHVSSHKRSDSELVEKIVADVRQKLDRRGRIGVYSRLTKIEYLLCKQPGCIIRSLGIWGMAGIGKTTLARAAYDQLSRDFEASCFIEDFDREFQEKGFFGLLEKQLGVNPQVTRLSILLKTLRSKRILLVLDDVRKPLGATSFLCEFDWLGPGSLIIVTSQDKQVLVQCQVNEIYKVQGLNKHESLQLFSRCAFGKDVPDQNLLELSMKFVDYANGNPLALSICGKNLKGKTPLDMKSVVLELKRHLSDKIFVKLKSSYDALSVSEKEIFLDIVFTFRGANVDNVMQSLAGCGFFPRVGIEALVDKSFVTVSENRVQVNNLIYDVGLKIINDQSDEIGMCYRFVDASNSQSLIEHKEIRESEQGYEDVKAINLDTSNLPFKGHIAFQHMYNLRYLTIYSSINPTKDPDLFLPGDPQFLPPELRLLHWTCYPLHSFPQNFGFQYLVELNMPCSKLKKLWGGTKNLEVLKRITLSCSVQLLNVDELQYSPNIEKIDLKGCLELQSFPDTGQLQHLRIVDLSTCKKIKSFPKVPPSIRKLHLQGTGIRDLSSLNHSSESQRLTRKLENVSSSNQDHRKQVLKLKDSSHLGSLPDIVIFESLEVLDFSGCSELEDIQGFPQNLKRLYLAKTAIKEVPSSLCHHISKLVKLDMENCERLRDLPMGMSNMKYLAVLKLSGCSNLENIKELPRNLKELYLAGTAVKEFPSTLLETLSEVVLLDLENCKKLQGLPTGMSKLEFLVMLKLSGCSKLEIIVDLPLNLIELYLAGTAIRELPPSIGDLALLDTLDLKNCNRLRHLPMEMHNLNPLKVLDLSNCSELEVFTSSLPKVRELRPAPTVMLLRSKLPFCFFIFYEHRVTLSLYKARLQYIPEEIRWMPSLKTLDLSRNGFTEVPVSIKDFSKLLSLRLRYCENLRSLPQLPRSLQLLNAHGCSSLQLITPDFKQLPRYYTFSNCFGLPSHMVSEVLANAPAIVECRKPQQGLENALACSFCLPSPTSRDSKLYLQPGSSTMIILNPKTRSTLVGFAILVEVSFSKDFHDTAGLGFRCVCRWNDKKGHAHKRDNIFHCWAPGEVVPKINDDHMFVFFDLKMHPSILFEGDVFGILADLVVFEIFPVNKQEMHVGDSCTITKCGVYVINDAAGSSSGNTMTPQCSSMDSLKLLDGKGKKRLRVNYAGLKQREKALFLYIACLLGGEKADLLAQFLASTDFVIESTLEDLAGRYLIDISSNGEVMMPPLQRNFSREIIHMLPASTKELVSMASGSPCNRNNDVFVSFHGKDFRKQFISDFLKKLVYKGIRICIGDKILSRSLINKVIKESSIAVVVFSENYASSSLCLLQLMEIMKCWEELGQVVMPIFYKVNPSDIRNQSGHFGKGFKKTCKKTINDERQRWSRALTDAASIAGECSLNWASDADMIEKVANDIRKKLISSKKLGKQIQRVDCDHDNPWETEFNKCIERFFQLPYDGNHDESLVSLTTEKVIDMKQTLKEIYQITKVKLKNNLVGRRHINNICFMHILYEKCEERSSFNPTSLHTLYDNGIPYQVYTKRKKHMSGEEKAPIGGCVGCFYMGQNQGITKAGGGRTMPTAYPAAPQANQGYNAGAQPYPPTAYAV.

A TIR 1 domain is found at 3 to 163 (DGKEVYISFN…KIVADVRQKL (161 aa)). Residue Glu-80 is part of the active site. An NB-ARC domain is found at 192-411 (SLGIWGMAGI…VSEKEIFLDI (220 aa)). LRR repeat units lie at residues 503 to 526 (YEDV…AFQH), 557 to 581 (PPEL…GFQY), 583 to 602 (VELN…TKNL), 603 to 626 (EVLK…QYSP), 648 to 669 (LQHL…PKVP), 670 to 692 (PSIR…NHSS), 710 to 733 (DHRK…IVIF), 734 to 754 (ESLE…QGFP), 755 to 777 (QNLK…LCHH), 779 to 802 (SKLV…MSNM), 804 to 823 (YLAV…KELP), 824 to 846 (RNLK…LLET), 848 to 871 (SEVV…MSKL), 892 to 915 (PLNL…IGDL), 917 to 939 (LLDT…MHNL), 941 to 963 (PLKV…LPKV), 987 to 1010 (YEHR…IRWM), 1011 to 1035 (PSLK…DFSK), 1037 to 1059 (LSLR…SLQL), and 1062 to 1086 (AHGC…TFSN). Positions 1399-1559 (RNNDVFVSFH…KVANDIRKKL (161 aa)) constitute a TIR 2 domain.

The protein belongs to the disease resistance TIR-NB-LRR family.

The enzyme catalyses NAD(+) + H2O = ADP-D-ribose + nicotinamide + H(+). Functionally, probable disease resistance protein. This chain is Probable disease resistance protein At4g19520, found in Arabidopsis thaliana (Mouse-ear cress).